The primary structure comprises 618 residues: Pyranose 2-oxidase (618 aa).

His170 carries the post-translational modification Tele-8alpha-FAD histidine. Residues Gln441 and His443 each coordinate substrate. The active-site Proton acceptor is His540. Residue Asn583 is part of the active site.

This sequence belongs to the GMC oxidoreductase family. Homotetramer. The cofactor is FAD.

It catalyses the reaction D-glucose + O2 = 2-dehydro-D-glucose + H2O2. In terms of biological role, catalyzes the oxidation of various aldopyranoses and disaccharides on carbon-2 to the corresponding 2-keto sugars concomitant with the reduction of O(2) to H(2)O(2). The chain is Pyranose 2-oxidase (p2ox) from Lyophyllum shimeji (Hon-shimeji).